A 170-amino-acid polypeptide reads, in one-letter code: ATP synthase subunit b (170 aa).

The helical transmembrane segment at 30-50 (FFFVLAIFLVVLAVIGTFVVP) threads the bilayer.

Belongs to the ATPase B chain family. F-type ATPases have 2 components, F(1) - the catalytic core - and F(0) - the membrane proton channel. F(1) has five subunits: alpha(3), beta(3), gamma(1), delta(1), epsilon(1). F(0) has three main subunits: a(1), b(2) and c(10-14). The alpha and beta chains form an alternating ring which encloses part of the gamma chain. F(1) is attached to F(0) by a central stalk formed by the gamma and epsilon chains, while a peripheral stalk is formed by the delta and b chains.

It is found in the cell membrane. In terms of biological role, f(1)F(0) ATP synthase produces ATP from ADP in the presence of a proton or sodium gradient. F-type ATPases consist of two structural domains, F(1) containing the extramembraneous catalytic core and F(0) containing the membrane proton channel, linked together by a central stalk and a peripheral stalk. During catalysis, ATP synthesis in the catalytic domain of F(1) is coupled via a rotary mechanism of the central stalk subunits to proton translocation. Its function is as follows. Component of the F(0) channel, it forms part of the peripheral stalk, linking F(1) to F(0). The sequence is that of ATP synthase subunit b from Mycobacterium marinum (strain ATCC BAA-535 / M).